An 800-amino-acid chain; its full sequence is Phosphate transporter PHO1 homolog 9 (800 aa).

One can recognise an SPX domain in the interval 1–346 (MKFGREFETQ…SRNASKPYLN (346 aa)). Over 1–398 (MKFGREFETQ…KTKREKHRIT (398 aa)) the chain is Cytoplasmic. 3 disordered regions span residues 38-77 (QKQQ…PGLS), 91-119 (NRAS…HNHH), and 212-234 (PDLN…PAPS). Positions 42-51 (RPPPPPPPPS) are enriched in pro residues. Over residues 63-75 (GEGGGGGGGGGPG) the composition is skewed to gly residues. The segment covering 95–119 (RSPKKSHKHHNPLSSKRHHHHHNHH) has biased composition (basic residues). Polar residues predominate over residues 216–229 (SVASAPSSPHSTMR). Residues 399–419 (YFLGFFSGCAVALAIAITVLV) traverse the membrane as a helical segment. Residues 420–439 (HIRGLTKSEGRHQYMENIFP) are Extracellular-facing. Residues 440-460 (LYSLFGFVAVHLFMYAADIYF) traverse the membrane as a helical segment. Residues 461 to 483 (WSRYRVNYPFIFGFEQGNDLGYR) lie on the Cytoplasmic side of the membrane. The chain crosses the membrane as a helical span at residues 484 to 504 (EVLLVGSGLAVLTFGGVISNL). The Extracellular portion of the chain corresponds to 505-520 (DMEMDPRTKSFSVITE). The helical transmembrane segment at 521-541 (LVPLALLVCLMMVLFCPFNII) threads the bilayer. Residues 542–670 (YRSSRYFFVG…IFEMKRGTYW (129 aa)) lie on the Cytoplasmic side of the membrane. Positions 606–800 (YDSEIYKELY…FQELGGSKSV (195 aa)) constitute an EXS domain. Residues 671 to 691 (LTVAVTTSSIATLFNTYWDIF) traverse the membrane as a helical segment. The Extracellular portion of the chain corresponds to 692–718 (RDWGLMNRNSKNPWLRDKLLVPYKSIY). Residues 719–739 (FIVMVANVVLRLAWMQTVLGI) form a helical membrane-spanning segment. Over 740–800 (KEAPFLHKRA…FQELGGSKSV (61 aa)) the chain is Cytoplasmic.

The protein belongs to the SYG1 (TC 2.A.94) family. In terms of tissue distribution, specifically expressed in pollen grains.

It localises to the cell membrane. Its function is as follows. May transport inorganic phosphate (Pi). The polypeptide is Phosphate transporter PHO1 homolog 9 (PHO1-H9) (Arabidopsis thaliana (Mouse-ear cress)).